The primary structure comprises 269 residues: GTP cyclohydrolase FolE2 (269 aa).

This sequence belongs to the GTP cyclohydrolase IV family.

It catalyses the reaction GTP + H2O = 7,8-dihydroneopterin 3'-triphosphate + formate + H(+). It participates in cofactor biosynthesis; 7,8-dihydroneopterin triphosphate biosynthesis; 7,8-dihydroneopterin triphosphate from GTP: step 1/1. In terms of biological role, converts GTP to 7,8-dihydroneopterin triphosphate. This chain is GTP cyclohydrolase FolE2, found in Burkholderia ambifaria (strain ATCC BAA-244 / DSM 16087 / CCUG 44356 / LMG 19182 / AMMD) (Burkholderia cepacia (strain AMMD)).